We begin with the raw amino-acid sequence, 375 residues long: Quinolinate synthase (375 aa).

Positions 47 and 64 each coordinate iminosuccinate. Cys-110 is a binding site for [4Fe-4S] cluster. Residues 144–146 (YVN) and Ser-165 each bind iminosuccinate. Residue Cys-235 coordinates [4Fe-4S] cluster. Iminosuccinate contacts are provided by residues 261-263 (HPE) and Thr-278. Cys-325 is a [4Fe-4S] cluster binding site.

Belongs to the quinolinate synthase family. Type 3 subfamily. [4Fe-4S] cluster is required as a cofactor.

The protein localises to the cytoplasm. The enzyme catalyses iminosuccinate + dihydroxyacetone phosphate = quinolinate + phosphate + 2 H2O + H(+). Its pathway is cofactor biosynthesis; NAD(+) biosynthesis; quinolinate from iminoaspartate: step 1/1. Functionally, catalyzes the condensation of iminoaspartate with dihydroxyacetone phosphate to form quinolinate. The sequence is that of Quinolinate synthase from Herpetosiphon aurantiacus (strain ATCC 23779 / DSM 785 / 114-95).